Consider the following 248-residue polypeptide: Uracil-DNA glycosylase (248 aa).

D85 functions as the Proton acceptor in the catalytic mechanism.

This sequence belongs to the uracil-DNA glycosylase (UDG) superfamily. UNG family.

It localises to the cytoplasm. It catalyses the reaction Hydrolyzes single-stranded DNA or mismatched double-stranded DNA and polynucleotides, releasing free uracil.. In terms of biological role, excises uracil residues from the DNA which can arise as a result of misincorporation of dUMP residues by DNA polymerase or due to deamination of cytosine. This is Uracil-DNA glycosylase from Deinococcus deserti (strain DSM 17065 / CIP 109153 / LMG 22923 / VCD115).